The chain runs to 418 residues: Enolase 1 (418 aa).

Q162 serves as a coordination point for (2R)-2-phosphoglycerate. Catalysis depends on E204, which acts as the Proton donor. Residues D241, E285, and D312 each contribute to the Mg(2+) site. K337, R366, S367, and K388 together coordinate (2R)-2-phosphoglycerate. K337 acts as the Proton acceptor in catalysis.

The protein belongs to the enolase family. Mg(2+) is required as a cofactor.

Its subcellular location is the cytoplasm. The protein resides in the secreted. It localises to the cell surface. The catalysed reaction is (2R)-2-phosphoglycerate = phosphoenolpyruvate + H2O. It functions in the pathway carbohydrate degradation; glycolysis; pyruvate from D-glyceraldehyde 3-phosphate: step 4/5. In terms of biological role, catalyzes the reversible conversion of 2-phosphoglycerate (2-PG) into phosphoenolpyruvate (PEP). It is essential for the degradation of carbohydrates via glycolysis. The polypeptide is Enolase 1 (Lactococcus lactis subsp. cremoris (strain SK11)).